The following is a 565-amino-acid chain: Urocanate hydratase (565 aa).

NAD(+) contacts are provided by residues 58–59 (GG), glutamine 136, 182–184 (GMG), glutamate 202, arginine 207, 245–246 (NA), 266–270 (QTSAH), 276–277 (YL), and tyrosine 325. Residue cysteine 413 is part of the active site. Glycine 495 lines the NAD(+) pocket.

This sequence belongs to the urocanase family. It depends on NAD(+) as a cofactor.

The protein localises to the cytoplasm. The enzyme catalyses 4-imidazolone-5-propanoate = trans-urocanate + H2O. It participates in amino-acid degradation; L-histidine degradation into L-glutamate; N-formimidoyl-L-glutamate from L-histidine: step 2/3. Its function is as follows. Catalyzes the conversion of urocanate to 4-imidazolone-5-propionate. The polypeptide is Urocanate hydratase (Vibrio vulnificus (strain YJ016)).